The following is a 352-amino-acid chain: Uroporphyrinogen decarboxylase (352 aa).

Residues 27–31 (RQAGR), Asp77, Tyr154, Thr209, and His325 each bind substrate.

It belongs to the uroporphyrinogen decarboxylase family. As to quaternary structure, homodimer.

The protein resides in the cytoplasm. It carries out the reaction uroporphyrinogen III + 4 H(+) = coproporphyrinogen III + 4 CO2. It participates in porphyrin-containing compound metabolism; protoporphyrin-IX biosynthesis; coproporphyrinogen-III from 5-aminolevulinate: step 4/4. Catalyzes the decarboxylation of four acetate groups of uroporphyrinogen-III to yield coproporphyrinogen-III. In Legionella pneumophila (strain Lens), this protein is Uroporphyrinogen decarboxylase.